Here is a 159-residue protein sequence, read N- to C-terminus: 2-C-methyl-D-erythritol 2,4-cyclodiphosphate synthase (159 aa).

Asp-10 and His-12 together coordinate a divalent metal cation. 4-CDP-2-C-methyl-D-erythritol 2-phosphate is bound by residues 10-12 and 36-37; these read DVH and HS. A divalent metal cation is bound at residue His-44. 4-CDP-2-C-methyl-D-erythritol 2-phosphate is bound by residues 58–60, 63–67, 102–108, 134–137, Phe-141, and Arg-144; these read DIG, FPDTD, AQAPKMA, and TTTE.

Belongs to the IspF family. As to quaternary structure, homotrimer. Requires a divalent metal cation as cofactor.

The catalysed reaction is 4-CDP-2-C-methyl-D-erythritol 2-phosphate = 2-C-methyl-D-erythritol 2,4-cyclic diphosphate + CMP. It participates in isoprenoid biosynthesis; isopentenyl diphosphate biosynthesis via DXP pathway; isopentenyl diphosphate from 1-deoxy-D-xylulose 5-phosphate: step 4/6. In terms of biological role, involved in the biosynthesis of isopentenyl diphosphate (IPP) and dimethylallyl diphosphate (DMAPP), two major building blocks of isoprenoid compounds. Catalyzes the conversion of 4-diphosphocytidyl-2-C-methyl-D-erythritol 2-phosphate (CDP-ME2P) to 2-C-methyl-D-erythritol 2,4-cyclodiphosphate (ME-CPP) with a corresponding release of cytidine 5-monophosphate (CMP). The protein is 2-C-methyl-D-erythritol 2,4-cyclodiphosphate synthase of Shewanella halifaxensis (strain HAW-EB4).